Consider the following 514-residue polypeptide: 1-pyrroline-5-carboxylate dehydrogenase (514 aa).

Active-site residues include glutamate 286 and cysteine 320.

The protein belongs to the aldehyde dehydrogenase family. RocA subfamily.

It catalyses the reaction L-glutamate 5-semialdehyde + NAD(+) + H2O = L-glutamate + NADH + 2 H(+). The protein operates within amino-acid degradation; L-proline degradation into L-glutamate; L-glutamate from L-proline: step 2/2. The polypeptide is 1-pyrroline-5-carboxylate dehydrogenase (Staphylococcus aureus (strain MW2)).